Here is a 178-residue protein sequence, read N- to C-terminus: Arginine repressor (178 aa).

The tract at residues 1–20 (MTEAQEPEYGGPSVPQTRTA) is disordered.

It belongs to the ArgR family.

The protein localises to the cytoplasm. The protein operates within amino-acid biosynthesis; L-arginine biosynthesis [regulation]. Regulates arginine biosynthesis genes. This Streptomyces griseus subsp. griseus (strain JCM 4626 / CBS 651.72 / NBRC 13350 / KCC S-0626 / ISP 5235) protein is Arginine repressor.